The following is a 326-amino-acid chain: Pancreas transcription factor 1 subunit alpha (326 aa).

The bHLH domain occupies 162-214 (QLRQAANVRERRRMQSINDAFEGLRSHIPTLPYEKRLSKVDTLRLAIGYINFL). Over residues 229-240 (TGGCGGPGGSRH) the composition is skewed to gly residues. 2 disordered regions span residues 229–249 (TGGC…PGNQ) and 304–326 (DPRK…EFVS).

Component of the pancreas transcription factor 1 complex (PTF1) which is composed of TCF3/p75, TCF12/p64 and PTF1A/p48. TCF3 is responsible for the nuclear import of the p48/p64 complex. Interacts with TCF3 and RBPSUH/RBP-Jkappa. In terms of tissue distribution, exocrine pancreas-specific. Expressed in azaserine-induced pancreatic tumors (at protein level). Expressed in AR42J cells but not in ARIP, DSL6A, or DSL6B cells. Down-regulation is associated with the change of an azaserine-induced acinar cell carcinoma to a ductal phenotype.

It localises to the nucleus. The protein localises to the cytoplasm. Its function is as follows. Transcription factor implicated in the cell fate determination in various organs. Binds to the E-box consensus sequence 5'-CANNTG-3'. Plays a role in early and late pancreas development and differentiation. Important for determining whether cells allocated to the pancreatic buds continue towards pancreatic organogenesis or revert back to duodenal fates. May be involved in the maintenance of exocrine pancreas-specific gene expression including ELA1 and amylase. Required for the formation of pancreatic acinar and ductal cells. Plays an important role in cerebellar development. Directly regulated by FOXN4 and RORC during retinal development, FOXN4-PTF1A pathway plays a central role in directing the differentiation of retinal progenitors towards horizontal and amacrine fates. The protein is Pancreas transcription factor 1 subunit alpha (Ptf1a) of Rattus norvegicus (Rat).